The chain runs to 93 residues: Co-chaperonin GroES (93 aa).

This sequence belongs to the GroES chaperonin family. As to quaternary structure, heptamer of 7 subunits arranged in a ring. Interacts with the chaperonin GroEL.

Its subcellular location is the cytoplasm. Functionally, together with the chaperonin GroEL, plays an essential role in assisting protein folding. The GroEL-GroES system forms a nano-cage that allows encapsulation of the non-native substrate proteins and provides a physical environment optimized to promote and accelerate protein folding. GroES binds to the apical surface of the GroEL ring, thereby capping the opening of the GroEL channel. This is Co-chaperonin GroES from Streptococcus constellatus.